The primary structure comprises 236 residues: tRNA (guanine-N(7)-)-methyltransferase (236 aa).

Over residues 1–17 (MSERKSDPDRDDSERAF) the composition is skewed to basic and acidic residues. Residues 1-23 (MSERKSDPDRDDSERAFFGRRKG) form a disordered region. Positions 67, 92, 119, and 141 each coordinate S-adenosyl-L-methionine. Asp141 is a catalytic residue. Residues Lys145 and Asp177 each coordinate substrate.

The protein belongs to the class I-like SAM-binding methyltransferase superfamily. TrmB family.

The catalysed reaction is guanosine(46) in tRNA + S-adenosyl-L-methionine = N(7)-methylguanosine(46) in tRNA + S-adenosyl-L-homocysteine. It participates in tRNA modification; N(7)-methylguanine-tRNA biosynthesis. Its function is as follows. Catalyzes the formation of N(7)-methylguanine at position 46 (m7G46) in tRNA. In Bradyrhizobium diazoefficiens (strain JCM 10833 / BCRC 13528 / IAM 13628 / NBRC 14792 / USDA 110), this protein is tRNA (guanine-N(7)-)-methyltransferase.